The chain runs to 481 residues: Arf-GAP domain and FG repeat-containing protein 2 (481 aa).

The Arf-GAP domain occupies 27–153 (EVWCRRVREL…WYVPPDQVKG (127 aa)). Residues 47–70 (CFECAQRGVTYVDITVGSFVCTTC) form a C4-type zinc finger. Disordered stretches follow at residues 150 to 220 (QVKG…SVKK), 271 to 309 (SSVFGSLPPAGQASFQAQPTPAGSSQGTPFGATPLAPAS), and 431 to 481 (QQNG…NPFL). A compositionally biased stretch (polar residues) spans 157-166 (TKGSASTPVQ). At Lys173 the chain carries N6-acetyllysine. Polar residues-rich tracts occupy residues 188–210 (VAASTSSQPVSQSHARTSQARST), 283–298 (ASFQAQPTPAGSSQGT), and 454–481 (AGISTNPFMTGPSSSPFASKPPTTNPFL).

In terms of assembly, interacts with EPS15R.

This is Arf-GAP domain and FG repeat-containing protein 2 (AGFG2) from Homo sapiens (Human).